We begin with the raw amino-acid sequence, 336 residues long: Inositol 2-dehydrogenase (336 aa).

Belongs to the Gfo/Idh/MocA family. As to quaternary structure, homotetramer.

It carries out the reaction myo-inositol + NAD(+) = scyllo-inosose + NADH + H(+). Its function is as follows. Involved in the oxidation of myo-inositol (MI) to 2-keto-myo-inositol (2KMI or 2-inosose). This is Inositol 2-dehydrogenase from Pseudomonas syringae pv. syringae (strain B728a).